The primary structure comprises 95 residues: MTQKEKNETCIHATVSGKVQGVFFRESVRKKAEELQLTGWVKNLSHGDVELVACGERDSIMILTEWLWEGPPQAAVSNVNWEEIVVEDYSDFRVR.

Positions 10-95 constitute an Acylphosphatase-like domain; sequence CIHATVSGKV…VEDYSDFRVR (86 aa). Residues Arg-25 and Asn-43 contribute to the active site.

It belongs to the acylphosphatase family.

The catalysed reaction is an acyl phosphate + H2O = a carboxylate + phosphate + H(+). This chain is Acylphosphatase (acyP), found in Coxiella burnetii (strain Dugway 5J108-111).